Reading from the N-terminus, the 63-residue chain is MSESVRIVACPTCKAEVRWEPQSRYRPFCSERCRLIDLGQWASESYRVPAEEDHPPGETPPTH.

Residues Cys-10, Cys-13, Cys-29, and Cys-33 each contribute to the Zn(2+) site.

Belongs to the DNA gyrase inhibitor YacG family. In terms of assembly, interacts with GyrB. The cofactor is Zn(2+).

Its function is as follows. Inhibits all the catalytic activities of DNA gyrase by preventing its interaction with DNA. Acts by binding directly to the C-terminal domain of GyrB, which probably disrupts DNA binding by the gyrase. The chain is DNA gyrase inhibitor YacG from Chromobacterium violaceum (strain ATCC 12472 / DSM 30191 / JCM 1249 / CCUG 213 / NBRC 12614 / NCIMB 9131 / NCTC 9757 / MK).